Here is a 670-residue protein sequence, read N- to C-terminus: DNA ligase (670 aa).

Residues aspartate 32–aspartate 36, serine 81–leucine 82, and glutamate 113 contribute to the NAD(+) site. Lysine 115 acts as the N6-AMP-lysine intermediate in catalysis. NAD(+) contacts are provided by arginine 136, glutamate 173, lysine 290, and lysine 314. The Zn(2+) site is built by cysteine 406, cysteine 409, cysteine 424, and cysteine 430. In terms of domain architecture, BRCT spans glutamate 592–glutamate 670.

The protein belongs to the NAD-dependent DNA ligase family. LigA subfamily. Mg(2+) serves as cofactor. The cofactor is Mn(2+).

The enzyme catalyses NAD(+) + (deoxyribonucleotide)n-3'-hydroxyl + 5'-phospho-(deoxyribonucleotide)m = (deoxyribonucleotide)n+m + AMP + beta-nicotinamide D-nucleotide.. In terms of biological role, DNA ligase that catalyzes the formation of phosphodiester linkages between 5'-phosphoryl and 3'-hydroxyl groups in double-stranded DNA using NAD as a coenzyme and as the energy source for the reaction. It is essential for DNA replication and repair of damaged DNA. This Erwinia tasmaniensis (strain DSM 17950 / CFBP 7177 / CIP 109463 / NCPPB 4357 / Et1/99) protein is DNA ligase.